The following is a 574-amino-acid chain: Sulfate adenylyltransferase (574 aa).

An N-terminal region spans residues 1–169 (MANSPHGGVL…IEAVNKLNHY (169 aa)). The interval 170-394 (DYVALRYSPA…LRESSPPRAT (225 aa)) is catalytic. Gln197 contacts sulfate. Residues 197-200 (QTRN) and 291-294 (GRDH) contribute to the ATP site. Active-site residues include Thr198, Arg199, and Asn200. Residue Arg199 participates in sulfate binding. Sulfate is bound at residue Ala295. Residue Val333 participates in ATP binding. An allosteric regulation domain; adenylyl-sulfate kinase-like region spans residues 395–574 (QGFTIFLTGY…LESEGYFDRL (180 aa)). 3'-phosphoadenylyl sulfate-binding positions include 434–437 (DTVR), Arg451, 477–478 (IA), and Arg516.

This sequence in the N-terminal section; belongs to the sulfate adenylyltransferase family. It in the C-terminal section; belongs to the APS kinase family. Homohexamer. Dimer of trimers.

It localises to the cytoplasm. The catalysed reaction is sulfate + ATP + H(+) = adenosine 5'-phosphosulfate + diphosphate. The protein operates within sulfur metabolism; hydrogen sulfide biosynthesis; sulfite from sulfate: step 1/3. Allosterically inhibited by 3'-phosphoadenosine 5'-phosphosulfate (PAPS). Functionally, catalyzes the first intracellular reaction of sulfate assimilation, forming adenosine-5'-phosphosulfate (APS) from inorganic sulfate and ATP. Plays an important role in sulfate activation as a component of the biosynthesis pathway of sulfur-containing amino acids. The chain is Sulfate adenylyltransferase from Aspergillus terreus (strain NIH 2624 / FGSC A1156).